The primary structure comprises 325 residues: GMP reductase (325 aa).

The Thioimidate intermediate role is filled by cysteine 174. NADP(+) is bound at residue 203 to 226 (LIADGGIRTHGDIAKSIRFGASMV).

It belongs to the IMPDH/GMPR family. GuaC type 2 subfamily.

It catalyses the reaction IMP + NH4(+) + NADP(+) = GMP + NADPH + 2 H(+). Catalyzes the irreversible NADPH-dependent deamination of GMP to IMP. It functions in the conversion of nucleobase, nucleoside and nucleotide derivatives of G to A nucleotides, and in maintaining the intracellular balance of A and G nucleotides. In Staphylococcus aureus (strain NCTC 8325 / PS 47), this protein is GMP reductase.